We begin with the raw amino-acid sequence, 109 residues long: UPF0060 membrane protein mma_0129 (109 aa).

The next 4 membrane-spanning stretches (helical) occupy residues 7-27, 31-51, 63-83, and 87-107; these read VALF…PYLW, GASI…VWLL, AAYG…VDGI, and NWDF…LFAP.

It belongs to the UPF0060 family.

The protein localises to the cell inner membrane. The chain is UPF0060 membrane protein mma_0129 from Janthinobacterium sp. (strain Marseille) (Minibacterium massiliensis).